The primary structure comprises 192 residues: tRNA (pseudouridine(54)-N(1))-methyltransferase (192 aa).

S-adenosyl-L-methionine is bound by residues L114 and G138.

This sequence belongs to the methyltransferase superfamily. TrmY family. As to quaternary structure, homodimer.

The protein localises to the cytoplasm. It carries out the reaction pseudouridine(54) in tRNA + S-adenosyl-L-methionine = N(1)-methylpseudouridine(54) in tRNA + S-adenosyl-L-homocysteine + H(+). Specifically catalyzes the N1-methylation of pseudouridine at position 54 (Psi54) in tRNAs. The sequence is that of tRNA (pseudouridine(54)-N(1))-methyltransferase from Aeropyrum pernix (strain ATCC 700893 / DSM 11879 / JCM 9820 / NBRC 100138 / K1).